A 328-amino-acid polypeptide reads, in one-letter code: Gonadotropin-releasing hormone receptor (328 aa).

The Extracellular portion of the chain corresponds to 1-38 (MANGDSPDQNENHCSAINSSILLTPGSLPTLTLSGKIR). N-linked (GlcNAc...) asparagine glycosylation occurs at asparagine 18. The chain crosses the membrane as a helical span at residues 39 to 58 (VTVTFFLFLLSTIFNTSFLL). Residues 59–77 (KLQNWTQRKEKRKKLSKMK) lie on the Cytoplasmic side of the membrane. Residues 78–97 (VLLKHLTLANLLETLIVMPL) traverse the membrane as a helical segment. Over 98–115 (DGMWNITVQWYAGELLCK) the chain is Extracellular. Asparagine 102 carries an N-linked (GlcNAc...) asparagine glycan. Residues cysteine 114 and cysteine 196 are joined by a disulfide bond. The helical transmembrane segment at 116–137 (VLSYLKLFSMYAPAFMMVVISL) threads the bilayer. The Cytoplasmic portion of the chain corresponds to 138–164 (DRSLAITRPLAVKSNSKLGQFMIGLAW). Residues 165 to 184 (LLSSIFAGPQLYIFGMIHLA) form a helical membrane-spanning segment. The Extracellular portion of the chain corresponds to 185–212 (DDSGQTEGFSQCVTHCSFPQWWHQAFYN). Residues 213 to 232 (FFTFSCLFIIPLLIMLICNA) form a helical membrane-spanning segment. Residues 233–281 (KIIFTLTRVLHQDPHKLQLNQSKNNIPQARLRTLKMTVAFATSFTVCWT) lie on the Cytoplasmic side of the membrane. The chain crosses the membrane as a helical span at residues 282–300 (PYYVLGIWYWFDPDMVNRV). The Extracellular segment spans residues 301–306 (SDPVNH). The helical transmembrane segment at 307-326 (FFFLFAFLNPCFDPLIYGYF) threads the bilayer. The Cytoplasmic segment spans residues 327–328 (SL).

Belongs to the G-protein coupled receptor 1 family.

The protein resides in the cell membrane. In terms of biological role, receptor for gonadotropin releasing hormone (GnRH) that mediates the action of GnRH to stimulate the secretion of the gonadotropic hormones luteinizing hormone (LH) and follicle-stimulating hormone (FSH). This receptor mediates its action by association with G-proteins that activate a phosphatidylinositol-calcium second messenger system. The chain is Gonadotropin-releasing hormone receptor (GNRHR) from Ovis aries (Sheep).